Reading from the N-terminus, the 357-residue chain is Peptide chain release factor 1 (357 aa).

Gln232 carries the N5-methylglutamine modification.

Belongs to the prokaryotic/mitochondrial release factor family. Methylated by PrmC. Methylation increases the termination efficiency of RF1.

It localises to the cytoplasm. In terms of biological role, peptide chain release factor 1 directs the termination of translation in response to the peptide chain termination codons UAG and UAA. The protein is Peptide chain release factor 1 of Oleidesulfovibrio alaskensis (strain ATCC BAA-1058 / DSM 17464 / G20) (Desulfovibrio alaskensis).